We begin with the raw amino-acid sequence, 463 residues long: Hydroxyacid-oxoacid transhydrogenase, mitochondrial (463 aa).

Belongs to the iron-containing alcohol dehydrogenase family. Hydroxyacid-oxoacid transhydrogenase subfamily.

It localises to the mitochondrion. The catalysed reaction is (S)-3-hydroxybutanoate + 2-oxoglutarate = (R)-2-hydroxyglutarate + acetoacetate. It carries out the reaction 4-hydroxybutanoate + 2-oxoglutarate = (R)-2-hydroxyglutarate + succinate semialdehyde. Catalyzes the cofactor-independent reversible oxidation of gamma-hydroxybutyrate (GHB) to succinic semialdehyde (SSA) coupled to reduction of 2-ketoglutarate (2-KG) to D-2-hydroxyglutarate (D-2-HG). L-3-hydroxybutyrate (L-3-OHB) is also a substrate for HOT when using 2-KG as hydrogen acceptor, resulting in the formation of D-2-HG. The sequence is that of Hydroxyacid-oxoacid transhydrogenase, mitochondrial (adhfe1) from Xenopus laevis (African clawed frog).